A 568-amino-acid polypeptide reads, in one-letter code: Protein NDNF (568 aa).

The N-terminal stretch at 1–19 is a signal peptide; that stretch reads MVLLHWCLLWLLFPLSSRT. 2 Fibronectin type-III domains span residues 261–331 and 445–564; these read NSGK…VGTF and PSLP…VVKT. Residue Asn-322 is glycosylated (N-linked (GlcNAc...) asparagine).

Binds heparin and chondroitin sulfate. Post-translationally, O-glycosylated; contains heparan sulfate and chondroitin sulfate. In terms of processing, N-glycosylated. Expressed in neurons along the gonadotropin-releasing hormone (GnRH) expressing neurons migratory route.

It localises to the secreted. Its function is as follows. Secretory protein that plays a role in various cellular processes. Acts as a chemorepellent acting on gonadotropin-releasing hormone (GnRH) expressing neurons regulating their migration to the hypothalamus. Also promotes neuron migration, growth and survival as well as neurite outgrowth and is involved in the development of the olfactory system. May also act through the regulation of growth factors activity and downstream signaling. Also regulates extracellular matrix assembly and cell adhesiveness. Promotes endothelial cell survival, vessel formation and plays an important role in the process of revascularization through NOS3-dependent mechanisms. The chain is Protein NDNF (NDNF) from Homo sapiens (Human).